A 2076-amino-acid chain; its full sequence is Protein Ycf2 (2076 aa).

1458–1465 (GSIGTGRS) contacts ATP.

This sequence belongs to the Ycf2 family.

It localises to the plastid. Its subcellular location is the chloroplast stroma. Probable ATPase of unknown function. Its presence in a non-photosynthetic plant (Epifagus virginiana) and experiments in tobacco indicate that it has an essential function which is probably not related to photosynthesis. This chain is Protein Ycf2, found in Acorus calamus (Sweet flag).